We begin with the raw amino-acid sequence, 464 residues long: Potassium/proton antiporter CemA (464 aa).

5 consecutive transmembrane segments (helical) span residues 36 to 56 (FSLS…TEIL), 241 to 261 (ASVS…QIAI), 341 to 361 (LLLR…LLIF), 389 to 409 (ILLL…EILV), and 425 to 445 (TPCF…YWIF).

It belongs to the CemA family.

It localises to the plastid. The protein resides in the chloroplast inner membrane. It catalyses the reaction K(+)(in) + H(+)(out) = K(+)(out) + H(+)(in). In terms of biological role, contributes to K(+)/H(+) antiport activity by supporting proton efflux to control proton extrusion and homeostasis in chloroplasts in a light-dependent manner to modulate photosynthesis. Prevents excessive induction of non-photochemical quenching (NPQ) under continuous-light conditions. Indirectly promotes efficient inorganic carbon uptake into chloroplasts. The sequence is that of Potassium/proton antiporter CemA from Adiantum capillus-veneris (Maidenhair fern).